Here is a 478-residue protein sequence, read N- to C-terminus: FERM domain-containing protein B (478 aa).

Disordered stretches follow at residues 19–39 (ELIPTQSQGSPSLSSSSTITS), 129–196 (EENS…GFLT), and 202–221 (KAQSPQLQSQSSSLSTTIAS). Low complexity-rich tracts occupy residues 22-39 (PTQSQGSPSLSSSSTITS) and 129-164 (EENSPSSSTSSPILSGLSSIRGKKSNASSTSNANDG). Residues 48 to 468 (VLIRIYFIDD…DWSEEWESKE (421 aa)) enclose the FERM domain. The segment covering 165–179 (SGSGSGSGSGSGSGS) has biased composition (gly residues). Low complexity-rich tracts occupy residues 180-189 (GTSTPNSPKG) and 204-216 (QSPQLQSQSSSLS).

This is FERM domain-containing protein B (frmB) from Dictyostelium discoideum (Social amoeba).